Here is an 882-residue protein sequence, read N- to C-terminus: Leucine--tRNA ligase (882 aa).

The 'HIGH' region motif lies at Pro-43–His-53. The short motif at Thr-632–Ser-636 is the 'KMSKS' region element. Lys-635 is a binding site for ATP.

The protein belongs to the class-I aminoacyl-tRNA synthetase family.

The protein localises to the cytoplasm. The enzyme catalyses tRNA(Leu) + L-leucine + ATP = L-leucyl-tRNA(Leu) + AMP + diphosphate. The polypeptide is Leucine--tRNA ligase (Synechococcus sp. (strain JA-2-3B'a(2-13)) (Cyanobacteria bacterium Yellowstone B-Prime)).